The chain runs to 188 residues: EP300-interacting inhibitor of differentiation 1 (188 aa).

Positions 1-122 (MSEMAELSEL…PEEEQLSGAG (122 aa)) are disordered. Acidic residues-rich tracts occupy residues 53-64 (LEEEGPMEEEEA) and 94-117 (FESEDEGEEFDDWEDDYDYPEEEQ). An interaction with NR0B2 region spans residues 55-121 (EEGPMEEEEA…YPEEEQLSGA (67 aa)). An LXCXE motif motif is present at residues 179-183 (LGCDE).

In terms of assembly, interacts via its LXCXE motif with the entire pocket region of RB1. Interacts with EP300, NR0B2 and TRIM27.

The protein localises to the nucleus. Its subcellular location is the cytoplasm. Interacts with RB1 and EP300 and acts as a repressor of MYOD1 transactivation. Inhibits EP300 and CBP histone acetyltransferase activity. May be involved in coupling cell cycle exit to the transcriptional activation of genes required for cellular differentiation. May act as a candidate coinhibitory factor for NR0B2 that can be directly linked to transcription inhibitory mechanisms. The protein is EP300-interacting inhibitor of differentiation 1 of Pongo abelii (Sumatran orangutan).